The sequence spans 185 residues: Transcriptional repressor NrdR (185 aa).

A disordered region spans residues 1–24 (MRCPFCGGPDTQVKDSRPSEDSSA). A zinc finger lies at 3 to 34 (CPFCGGPDTQVKDSRPSEDSSAIRRRRVCPDC). Basic and acidic residues predominate over residues 12–24 (QVKDSRPSEDSSA). Residues 49–139 (LVVLKRSGKR…VYKNFREAQD (91 aa)) enclose the ATP-cone domain. The tract at residues 148–185 (GERLDGEGDLPEQGDAVPAPPDEAVAAPRRGRPARKRA) is disordered. Positions 176-185 (RRGRPARKRA) are enriched in basic residues.

This sequence belongs to the NrdR family. Requires Zn(2+) as cofactor.

Its function is as follows. Negatively regulates transcription of bacterial ribonucleotide reductase nrd genes and operons by binding to NrdR-boxes. The sequence is that of Transcriptional repressor NrdR from Methylorubrum extorquens (strain CM4 / NCIMB 13688) (Methylobacterium extorquens).